The sequence spans 156 residues: Small ribosomal subunit protein uS7 (156 aa).

Belongs to the universal ribosomal protein uS7 family. As to quaternary structure, part of the 30S ribosomal subunit. Contacts proteins S9 and S11.

One of the primary rRNA binding proteins, it binds directly to 16S rRNA where it nucleates assembly of the head domain of the 30S subunit. Is located at the subunit interface close to the decoding center, probably blocks exit of the E-site tRNA. The polypeptide is Small ribosomal subunit protein uS7 (Neisseria meningitidis serogroup C (strain 053442)).